The chain runs to 309 residues: Methionyl-tRNA formyltransferase (309 aa).

109–112 (SLLP) is a (6S)-5,6,7,8-tetrahydrofolate binding site.

Belongs to the Fmt family.

The catalysed reaction is L-methionyl-tRNA(fMet) + (6R)-10-formyltetrahydrofolate = N-formyl-L-methionyl-tRNA(fMet) + (6S)-5,6,7,8-tetrahydrofolate + H(+). Functionally, attaches a formyl group to the free amino group of methionyl-tRNA(fMet). The formyl group appears to play a dual role in the initiator identity of N-formylmethionyl-tRNA by promoting its recognition by IF2 and preventing the misappropriation of this tRNA by the elongation apparatus. This is Methionyl-tRNA formyltransferase from Thiobacillus denitrificans (strain ATCC 25259 / T1).